The following is an 808-amino-acid chain: Protein tortoise (808 aa).

Residues 43-78 (KDRKELYSLNNDSIKKKLNQLKDETNQLLKERGEEL) are a coiled coil. The tract at residues 152 to 171 (LTSGGANKKKSPFLEDNNNK) is disordered. Residues 694 to 733 (EDLDFQIEELELMIKNKKILEREIKAHNEKISKIIKDSRD) are a coiled coil.

It localises to the mitochondrion. Required for efficient chemotaxis. This chain is Protein tortoise (torA), found in Dictyostelium discoideum (Social amoeba).